The primary structure comprises 1083 residues: Histone-lysine N-methyltransferase ATX2 (1083 aa).

The Nuclear localization signal motif lies at histidine 77–histidine 84. The region spanning proline 315–glycine 379 is the PWWP domain. Residues threonine 422 to threonine 443 are disordered. One can recognise an FYR N-terminal domain in the interval aspartate 457–aspartate 516. Residues lysine 520–tyrosine 604 enclose the FYR C-terminal domain. The PHD-type 1 zinc finger occupies leucine 626–valine 677. The segment at proline 682–threonine 715 adopts a C2HC pre-PHD-type zinc-finger fold. The extended PHD domain (ePHD) stretch occupies residues proline 682–arginine 807. The segment at leucine 739–arginine 807 adopts a PHD-type 2 zinc-finger fold. Residues lysine 919–arginine 1037 form the SET domain. Residue histidine 929 participates in S-adenosyl-L-methionine binding. Serine 968 is a glycosylation site (O-linked (GlcNAc) serine). Residues tyrosine 975 and asparagine 998–histidine 999 each bind S-adenosyl-L-methionine. Residue cysteine 1001 coordinates Zn(2+). Tyrosine 1036 provides a ligand contact to S-adenosyl-L-methionine. Positions glutamate 1043–asparagine 1059 constitute a Post-SET domain. Zn(2+) is bound by residues cysteine 1047, cysteine 1049, and cysteine 1054.

Belongs to the class V-like SAM-binding methyltransferase superfamily. Histone-lysine methyltransferase family. TRX/MLL subfamily. Post-translationally, activated via O-glycosylation. As to expression, expressed in roots, leaves and flowers and, to a lower extent, in young seedlings.

It is found in the nucleus. The catalysed reaction is N(6)-methyl-L-lysyl-[histone] + S-adenosyl-L-methionine = N(6),N(6)-dimethyl-L-lysyl-[histone] + S-adenosyl-L-homocysteine + H(+). Functionally, histone methyltransferase. Dimethylates 'Lys-4' of histone H3 (H3K4me2). H3 'Lys-4' methylation represents a specific tag for epigenetic transcriptional activation. Methylates only a limited fraction of nucleosomes of target genes (e.g. NAP and XTH33). Involved in epigenetic regulation of the floral repressor FLC and FT to prevent the transition from vegetative to reproductive development. The chain is Histone-lysine N-methyltransferase ATX2 from Arabidopsis thaliana (Mouse-ear cress).